The primary structure comprises 259 residues: Complement factor D (259 aa).

The N-terminal stretch at 1 to 21 is a signal peptide; it reads MADRSLHLVVLILLGTALCAA. The propeptide at 22–26 is activation peptide; the sequence is QPRGR. In terms of domain architecture, Peptidase S1 spans 27-254; the sequence is ILRGQEAPSH…YVAWIDGVMA (228 aa). A disulfide bridge links C52 with C68. Catalysis depends on charge relay system residues H67 and D115. Intrachain disulfides connect C149/C215, C180/C196, and C205/C230. Residue S209 is the Charge relay system of the active site. A self-inhibitor loop region spans residues 224–228; it reads TSGSR.

It belongs to the peptidase S1 family. CFD is activated by the removal of 5 residues at the N-terminus, named activation peptide, by the MASP-3 isoform of MASP1.

Its subcellular location is the secreted. The catalysed reaction is Selective cleavage of Arg-|-Lys bond in complement factor B when in complex with complement subcomponent C3b or with cobra venom factor.. Circulates in plasma in a mature but self-inhibited form. Activated by factor B (CFB), which displaces the self-inhibition loop. Associates with CFB complexed with complement C3b. Serine protease that initiates the alternative pathway of the complement system, a cascade of proteins that leads to phagocytosis and breakdown of pathogens and signaling that strengthens the adaptive immune system. In contrast to other complement pathways (classical, lectin and GZMK) that are directly activated by pathogens or antigen-antibody complexes, the alternative complement pathway is initiated by the spontaneous hydrolysis of complement C3. The alternative complement pathway acts as an amplification loop that enhances complement activation by mediating the formation of C3 and C5 convertases. Activated CFD cleaves factor B (CFB) when the latter is complexed with complement C3b, activating the C3 convertase of the alternative pathway. The polypeptide is Complement factor D (CFD) (Bos taurus (Bovine)).